Reading from the N-terminus, the 124-residue chain is Histone H2B 1/2 (124 aa).

The segment at 1–32 (MPEPAKAAPKKGSKKAVTKTAGKGGKKRKRTR) is disordered. 2 positions are modified to N6-acetyllysine: K6 and K11. Residues 8–17 (APKKGSKKAV) show a composition bias toward basic residues. Residue S13 is modified to Phosphoserine. K14 and K19 each carry N6-acetyllysine. A glycan (O-linked (GlcNAc) serine) is linked at S111. Residue K119 forms a Glycyl lysine isopeptide (Lys-Gly) (interchain with G-Cter in ubiquitin) linkage.

This sequence belongs to the histone H2B family. As to quaternary structure, the nucleosome is a histone octamer containing two molecules each of H2A, H2B, H3 and H4 assembled in one H3-H4 heterotetramer and two H2A-H2B heterodimers. The octamer wraps approximately 147 bp of DNA. In terms of processing, monoubiquitination of Lys-119 by the BRE1 gives a specific tag for epigenetic transcriptional activation and is also prerequisite for histone H3 'Lys-4' and 'Lys-79' methylation. Phosphorylated during apoptosis; which facilitates apoptotic chromatin condensation. Post-translationally, glcNAcylation at Ser-111 promotes monoubiquitination of Lys-119. It fluctuates in response to extracellular glucose, and associates with transcribed genes.

The protein localises to the nucleus. The protein resides in the chromosome. Its function is as follows. Core component of nucleosome. Nucleosomes wrap and compact DNA into chromatin, limiting DNA accessibility to the cellular machineries which require DNA as a template. Histones thereby play a central role in transcription regulation, DNA repair, DNA replication and chromosomal stability. DNA accessibility is regulated via a complex set of post-translational modifications of histones, also called histone code, and nucleosome remodeling. This chain is Histone H2B 1/2, found in Danio rerio (Zebrafish).